Reading from the N-terminus, the 45-residue chain is Mu-conotoxin-like Cal 12.1.2c (45 aa).

4 disulfide bridges follow: Cys3/Cys16, Cys11/Cys28, Cys18/Cys33, and Cys27/Cys39. Pro23 is modified (4-hydroxyproline). A 6'-bromotryptophan mark is found at Trp37 and Trp38. Pro40 is subject to 4-hydroxyproline. Residue Trp44 is modified to 6'-bromotryptophan.

As to expression, expressed by the venom duct.

The protein localises to the secreted. Its function is as follows. Mu-conotoxins block voltage-gated sodium channels. This toxin reversibly blocks voltage-gated sodium channel in cephalopods, with no alteration in the voltage dependence of sodium conductance or on the kinetics of inactivation. The sequence is that of Mu-conotoxin-like Cal 12.1.2c from Californiconus californicus (California cone).